The chain runs to 287 residues: Inositol diphosphatase siw14 (287 aa).

The Tyrosine-protein phosphatase domain maps to 85–256 (NFGVVYPGII…LNDLKRYISD (172 aa)). S156 and S159 each carry phosphoserine. The active-site Phosphocysteine intermediate is C189.

Belongs to the protein-tyrosine phosphatase family. Atypical dual-specificity phosphatase Siw14-like subfamily.

Its subcellular location is the cytoplasm. It is found in the nucleus. It carries out the reaction 5-diphospho-1D-myo-inositol 1,2,3,4,6-pentakisphosphate + H2O = 1D-myo-inositol hexakisphosphate + phosphate + H(+). It catalyses the reaction 1-diphospho-1D-myo-inositol 2,3,4,5,6-pentakisphosphate + H2O = 1D-myo-inositol hexakisphosphate + phosphate + H(+). The enzyme catalyses 1,5-bis(diphospho)-1D-myo-inositol 2,3,4,6-tetrakisphosphate + H2O = 1-diphospho-1D-myo-inositol 2,3,4,5,6-pentakisphosphate + phosphate + 2 H(+). Its activity is regulated as follows. Activity is inhibited by the reaction product inorganic phosphate and by sulfate (a phosphate mimetic). Not inhibited by magnesium. Its function is as follows. Cleaves the beta-phosphate at the 1- and 5-position of soluble inositol pyrophosphates. Has exopolyphosphatase activity in vitro but does not appear to contribute to the homeostasis of cellular polyphosphate. The sequence is that of Inositol diphosphatase siw14 from Schizosaccharomyces pombe (strain 972 / ATCC 24843) (Fission yeast).